Consider the following 88-residue polypeptide: MGIARILSAVLFLSVLFVVTFPTLLSADHHDGRIDTCRLPSDRGRCKASFERWYFNGTTCTKFVYGGYGGNDNRFPTEKACMERCAKA.

Positions 1-27 (MGIARILSAVLFLSVLFVVTFPTLLSA) are cleaved as a signal peptide. Positions 28 to 33 (DHHDGR) are excised as a propeptide. The BPTI/Kunitz inhibitor domain maps to 37-85 (CRLPSDRGRCKASFERWYFNGTTCTKFVYGGYGGNDNRFPTEKACMERC). 2 cysteine pairs are disulfide-bonded: Cys-37–Cys-85 and Cys-60–Cys-81.

Belongs to the venom Kunitz-type family. 01 (intermediate) subfamily. As to expression, expressed by the venom gland.

The protein resides in the secreted. Functionally, serine protease inhibitor that inhibits trypsin at a molar ratio of 1:1. This chain is Kunitz-type U15-theraphotoxin-Hhn1q, found in Cyriopagopus hainanus (Chinese bird spider).